The chain runs to 157 residues: Endoribonuclease YbeY (157 aa).

The Zn(2+) site is built by His-115, His-119, and His-125.

Belongs to the endoribonuclease YbeY family. The cofactor is Zn(2+).

Its subcellular location is the cytoplasm. In terms of biological role, single strand-specific metallo-endoribonuclease involved in late-stage 70S ribosome quality control and in maturation of the 3' terminus of the 16S rRNA. The sequence is that of Endoribonuclease YbeY from Micrococcus luteus (strain ATCC 4698 / DSM 20030 / JCM 1464 / CCM 169 / CCUG 5858 / IAM 1056 / NBRC 3333 / NCIMB 9278 / NCTC 2665 / VKM Ac-2230) (Micrococcus lysodeikticus).